We begin with the raw amino-acid sequence, 344 residues long: Melanocyte-stimulating hormone receptor (344 aa).

At 1–37 (MPMQGAQRKLLGSLNSTPTATSNPGLAANHTGAPCLE) the chain is on the extracellular side. A glycan (N-linked (GlcNAc...) asparagine) is linked at asparagine 29. A helical transmembrane segment spans residues 38–63 (VSIPDGLFLSLGLVSLVENVLVVAAI). The Cytoplasmic portion of the chain corresponds to 64–72 (AKNRNLHSS). Residues 73–93 (MYYFICCLALSDLLVSGSNML) form a helical membrane-spanning segment. Over 94 to 118 (ETAIILLLEAGTLATRASVVQQLHN) the chain is Extracellular. A helical transmembrane segment spans residues 119-140 (TIDVLTCSSMLCSLCFLGAIAV). Topologically, residues 141–163 (DRYISIFYALRYHSIMTLPRAQR) are cytoplasmic. Residues 164–183 (AIAAIWVASVLSSTLFITYY) traverse the membrane as a helical segment. The Extracellular portion of the chain corresponds to 184-191 (DHAAVLLC). A helical transmembrane segment spans residues 192–211 (LVVFFLAMLVLMAVLYVHML). Over 212–240 (ARACQHAQGIIRLHNRQLPAHKGFGLRGA) the chain is Cytoplasmic. The helical transmembrane segment at 241-266 (ATLTILLGIFFLCWGPFFLHLTLVVF) threads the bilayer. At 267–279 (CPQHLTCNCIFKN) the chain is on the extracellular side. Residues 280–300 (FKVFLTLIICNTIIDPLIYAF) form a helical membrane-spanning segment. Residues 301–344 (RSQELRRTLKEVLLCSSWPGCWAEGGGDSVWPGSCVTLRGPLPP) are Cytoplasmic-facing. Cysteine 315 carries the S-palmitoyl cysteine lipid modification.

The protein belongs to the G-protein coupled receptor 1 family. As to quaternary structure, interacts with MGRN1, but does not undergo MGRN1-mediated ubiquitination; this interaction competes with GNAS-binding and thus inhibits agonist-induced cAMP production. Interacts with OPN3; the interaction results in a decrease in MC1R-mediated cAMP signaling and ultimately a decrease in melanin production in melanocytes.

Its subcellular location is the cell membrane. Functionally, receptor for MSH (alpha, beta and gamma) and ACTH. The activity of this receptor is mediated by G proteins which activate adenylate cyclase. Mediates melanogenesis, the production of eumelanin (black/brown) and phaeomelanin (red/yellow), via regulation of cAMP signaling in melanocytes. In Callithrix jacchus (White-tufted-ear marmoset), this protein is Melanocyte-stimulating hormone receptor (MC1R).